The sequence spans 332 residues: 5-dehydro-2-deoxygluconokinase (332 aa).

The protein belongs to the carbohydrate kinase PfkB family.

The enzyme catalyses 5-dehydro-2-deoxy-D-gluconate + ATP = 6-phospho-5-dehydro-2-deoxy-D-gluconate + ADP + H(+). Its pathway is polyol metabolism; myo-inositol degradation into acetyl-CoA; acetyl-CoA from myo-inositol: step 5/7. In terms of biological role, catalyzes the phosphorylation of 5-dehydro-2-deoxy-D-gluconate (2-deoxy-5-keto-D-gluconate or DKG) to 6-phospho-5-dehydro-2-deoxy-D-gluconate (DKGP). This is 5-dehydro-2-deoxygluconokinase from Bacillus anthracis (strain A0248).